A 193-amino-acid polypeptide reads, in one-letter code: MHKVAIFGGSFDPVHKSHIQIAKLAFKSLDLKKMIFVIAYTPPHKTKQYAYIEDRISMLKLATGNMQKTEISLYEAQKLETVYSYQTLDYFNSLYPEDEIYMVIGSDSLLDLPIWNNIDYMAGRYKFIVAKRHGFDEVNKNVKYLDRCVFIDKETEDISSTEIRRLVKEDYKKAVSMLNKKVYNYIIQNGLYK.

This sequence belongs to the NadD family.

The catalysed reaction is nicotinate beta-D-ribonucleotide + ATP + H(+) = deamido-NAD(+) + diphosphate. Its pathway is cofactor biosynthesis; NAD(+) biosynthesis; deamido-NAD(+) from nicotinate D-ribonucleotide: step 1/1. Its function is as follows. Catalyzes the reversible adenylation of nicotinate mononucleotide (NaMN) to nicotinic acid adenine dinucleotide (NaAD). In Endomicrobium trichonymphae, this protein is Probable nicotinate-nucleotide adenylyltransferase.